Here is a 234-residue protein sequence, read N- to C-terminus: Peroxiredoxin (234 aa).

In terms of domain architecture, Thioredoxin spans proline 6–valine 161. Catalysis depends on cysteine 48, which acts as the Cysteine sulfenic acid (-SOH) intermediate. Arginine 124 provides a ligand contact to substrate. A disulfide bridge links cysteine 203 with cysteine 209.

The protein belongs to the peroxiredoxin family. Prx6 subfamily. As to quaternary structure, homodecamer. Pentamer of dimers that assemble into a ring structure.

The protein resides in the cytoplasm. It carries out the reaction a hydroperoxide + [thioredoxin]-dithiol = an alcohol + [thioredoxin]-disulfide + H2O. In terms of biological role, thiol-specific peroxidase that catalyzes the reduction of hydrogen peroxide and organic hydroperoxides to water and alcohols, respectively. Plays a role in cell protection against oxidative stress by detoxifying peroxides. The chain is Peroxiredoxin from Ignicoccus hospitalis (strain KIN4/I / DSM 18386 / JCM 14125).